We begin with the raw amino-acid sequence, 549 residues long: uncharacterized protein (549 aa).

A run of 12 helical transmembrane segments spans residues 1 to 21 (MEIFFTILIMTLVVSLSGVVT), 28 to 48 (IPLPLMQIAIGALLAWPTFGL), 50 to 70 (VEFDPELFLVLFIPPLLFADG), 85 to 105 (IFGLALALVVVTVVGIGFLIY), 106 to 126 (WVVPGIPLIPAFALAAVLSPT), 165 to 185 (FAVAVAMGTMIFTVGGATVEF), 187 to 207 (KVAIGGILAGFVVSWLYGRSL), 222 to 242 (IVLLFLLPFASYLIAEHIGVS), 278 to 298 (LEFVFNGMVFLLLGLQLPGIL), 310 to 330 (NVEIWMLFTNIILIYAALMLV), 361 to 381 (ILIASFAGVRGAITLAGVLSI), and 398 to 418 (VFLAAGVILFSLFVGVVMLPI).

It belongs to the monovalent cation:proton antiporter 1 (CPA1) transporter (TC 2.A.36) family.

Its subcellular location is the cell inner membrane. This is an uncharacterized protein from Escherichia coli (strain K12).